A 251-amino-acid chain; its full sequence is Transmembrane ascorbate-dependent reductase CYB561 (251 aa).

At M1 the chain carries N-acetylmethionine. Topologically, residues M1–Y16 are cytoplasmic. The chain crosses the membrane as a helical span at residues V17–L37. Residues F19–T220 form the Cytochrome b561 domain. At Y38–N51 the chain is on the vesicular side. A helical transmembrane segment spans residues A52–Y72. The heme b site is built by H53, R73, and K80. Topologically, residues R73 to V85 are cytoplasmic. Residues K80 and K84 each contribute to the L-ascorbate site. A helical membrane pass occupies residues L86–F106. Heme b-binding positions include H87, D116–S119, and H121. Residues D107–C124 lie on the Vesicular side of the membrane. Residues G125–F145 form a helical membrane-spanning segment. The Cytoplasmic portion of the chain corresponds to P146–P158. R153 serves as a coordination point for L-ascorbate. Residues Q159–L179 traverse the membrane as a helical segment. Positions 160 and 181 each coordinate heme b. Residues K180–G198 are Vesicular-facing. The helical transmembrane segment at V199 to L219 threads the bilayer. Residues T220 to Q251 lie on the Cytoplasmic side of the membrane. K225 is a binding site for heme b. Position 247 is a phosphoserine (S247).

It depends on heme b as a cofactor. In terms of tissue distribution, expressed in many tissues, in particular the brain especially in the cortex and hippocampus.

The protein resides in the cytoplasmic vesicle. It localises to the secretory vesicle. The protein localises to the chromaffin granule membrane. The catalysed reaction is monodehydro-L-ascorbate radical(out) + L-ascorbate(in) = monodehydro-L-ascorbate radical(in) + L-ascorbate(out). Its function is as follows. Transmembrane reductase that uses ascorbate as an electron donor in the cytoplasm and transfers electrons across membranes to reduce monodehydro-L-ascorbate radical in the lumen of secretory vesicles. It is therefore involved the regeneration and homeostasis within secretory vesicles of ascorbate which in turn provides reducing equivalents needed to support the activity of intravesicular enzymes. The sequence is that of Transmembrane ascorbate-dependent reductase CYB561 from Homo sapiens (Human).